We begin with the raw amino-acid sequence, 212 residues long: Uridine kinase (212 aa).

13–20 (GASASGKS) lines the ATP pocket.

It belongs to the uridine kinase family.

It is found in the cytoplasm. The enzyme catalyses uridine + ATP = UMP + ADP + H(+). The catalysed reaction is cytidine + ATP = CMP + ADP + H(+). The protein operates within pyrimidine metabolism; CTP biosynthesis via salvage pathway; CTP from cytidine: step 1/3. Its pathway is pyrimidine metabolism; UMP biosynthesis via salvage pathway; UMP from uridine: step 1/1. This chain is Uridine kinase, found in Shewanella baltica (strain OS155 / ATCC BAA-1091).